The primary structure comprises 243 residues: MDCGIITSKTILLLLSLIFWAAGAALAYVGSYVIKSYNNFEDFMSDRHTLIPAAIIIGVAVVMFIIGFVGCCATLRESKVGLGLFLIIIMLIFAAEVTAFVFGIIYRGRIRGDLEKSMNDVFLKYDGLNSETHAVDYLQSQLECCGVKNQTDWTLTSWFAQHNNTVPQSCCKANMTQCTGQLSQPDLLNTQGCEAKLEQVLQDVLSYAMLVILGFAIIKFFGMLSVCVITCKSKKNEYQPLYA.

The Cytoplasmic segment spans residues 1–9 (MDCGIITSK). A helical membrane pass occupies residues 10-30 (TILLLLSLIFWAAGAALAYVG). The Lumenal segment spans residues 31 to 49 (SYVIKSYNNFEDFMSDRHT). Residues 50 to 70 (LIPAAIIIGVAVVMFIIGFVG) traverse the membrane as a helical segment. Topologically, residues 71-84 (CCATLRESKVGLGL) are cytoplasmic. Residues 85–105 (FLIIIMLIFAAEVTAFVFGII) form a helical membrane-spanning segment. At 106-208 (YRGRIRGDLE…QVLQDVLSYA (103 aa)) the chain is on the lumenal side. 3 N-linked (GlcNAc...) asparagine glycosylation sites follow: Asn-149, Asn-163, and Asn-174. The helical transmembrane segment at 209-229 (MLVILGFAIIKFFGMLSVCVI) threads the bilayer. The Cytoplasmic portion of the chain corresponds to 230–243 (TCKSKKNEYQPLYA).

It belongs to the tetraspanin (TM4SF) family. N-glycosylated. In terms of tissue distribution, strongly expressed in melanophores and xanthophores. Also detected in eye, brain, heart, skin, fin, testis and ovary.

It is found in the golgi apparatus membrane. The protein resides in the endoplasmic reticulum membrane. In terms of biological role, plays a role in migration and segregation of pigment cells (melanophores and xanthophores). Contributes to pigment stripe patterning in the epidermis. The chain is Tetraspanin-36 from Danio rerio (Zebrafish).